Consider the following 409-residue polypeptide: uncharacterized protein (409 aa).

The signal sequence occupies residues M1–T29. C30 carries the N-palmitoyl cysteine lipid modification. The S-diacylglycerol cysteine moiety is linked to residue C30.

It belongs to the TP013X lipoprotein family.

The protein resides in the cell membrane. This is an uncharacterized protein from Treponema pallidum (strain Nichols).